Reading from the N-terminus, the 1054-residue chain is Disks large-associated protein 2 (1054 aa).

Disordered stretches follow at residues 32 to 87 (EPEE…SGSR) and 242 to 301 (SHSL…SDDN). Positions 242–255 (SHSLEGSSKSNANG) are enriched in polar residues. The span at 267-281 (HAHHAKHSKRSKSKE) shows a compositional bias: basic residues. Residues 289–299 (RPGMSSWWSSD) show a composition bias toward low complexity. 4 positions are modified to phosphoserine: Ser-298, Ser-304, Ser-386, and Ser-452. Disordered stretches follow at residues 442–464 (GDEESGESDSSPKTSPKSAILPE) and 609–666 (YKKT…TDSL). Residues 628–641 (VTAQSSTESTQDAY) are compositionally biased toward polar residues. Phosphoserine occurs at positions 662, 665, 668, and 715. The interval 719-746 (QDSEFPEHQPYPRSDVETATDSDTESRG) is disordered. Position 738 is a phosphothreonine (Thr-738). Phosphoserine is present on residues Ser-740, Ser-771, Ser-806, Ser-978, and Ser-1007. 2 stretches are compositionally biased toward basic and acidic residues: residues 977-987 (ESPERKEERKV) and 1002-1020 (ITREKSLDLPDRQRQEARR). The segment at 977–1021 (ESPERKEERKVPPPIPKKPPKGKFPITREKSLDLPDRQRQEARRR) is disordered.

Belongs to the SAPAP family. In terms of assembly, interacts with DLG1 and DLG4/PSD-95. Expressed in brain and kidney.

It localises to the cell membrane. The protein localises to the postsynaptic density. It is found in the synapse. Functionally, may play a role in the molecular organization of synapses and neuronal cell signaling. Could be an adapter protein linking ion channel to the subsynaptic cytoskeleton. May induce enrichment of PSD-95/SAP90 at the plasma membrane. This is Disks large-associated protein 2 from Homo sapiens (Human).